A 180-amino-acid polypeptide reads, in one-letter code: Large ribosomal subunit protein uL6c (180 aa).

Belongs to the universal ribosomal protein uL6 family. Part of the 50S ribosomal subunit.

The protein localises to the plastid. It is found in the chloroplast. In terms of biological role, binds 23S rRNA. This Pyropia yezoensis (Susabi-nori) protein is Large ribosomal subunit protein uL6c (rpl6).